The chain runs to 201 residues: Potassium-transporting ATPase KdpC subunit (201 aa).

A helical membrane pass occupies residues 12–34 (LLALTMITGLAYPLAVTGLATVL). Residues 69–102 (RPSATVAPDPADSSKTVSAPYNAANSGGSNLGPT) form a disordered region. Residues 81–101 (SSKTVSAPYNAANSGGSNLGP) are compositionally biased toward polar residues.

Belongs to the KdpC family. In terms of assembly, the system is composed of three essential subunits: KdpA, KdpB and KdpC.

The protein resides in the cell inner membrane. Its function is as follows. Part of the high-affinity ATP-driven potassium transport (or Kdp) system, which catalyzes the hydrolysis of ATP coupled with the electrogenic transport of potassium into the cytoplasm. This subunit acts as a catalytic chaperone that increases the ATP-binding affinity of the ATP-hydrolyzing subunit KdpB by the formation of a transient KdpB/KdpC/ATP ternary complex. The protein is Potassium-transporting ATPase KdpC subunit of Rhodopseudomonas palustris (strain TIE-1).